A 71-amino-acid chain; its full sequence is Large ribosomal subunit protein bL31 (71 aa).

Zn(2+) contacts are provided by Cys16, Cys18, Cys37, and Cys40.

It belongs to the bacterial ribosomal protein bL31 family. Type A subfamily. In terms of assembly, part of the 50S ribosomal subunit. Requires Zn(2+) as cofactor.

In terms of biological role, binds the 23S rRNA. This is Large ribosomal subunit protein bL31 from Pseudoalteromonas translucida (strain TAC 125).